The following is a 463-amino-acid chain: Eukaryotic translation initiation factor 3 subunit E (463 aa).

The PCI domain maps to 224 to 407; the sequence is FNLGENQGCQ…NMLHITRPHA (184 aa). Residues 432-463 are disordered; sequence QSSVGEPRERGERGERGNKGGRGRPRTQEVAA. Residues 437-449 are compositionally biased toward basic and acidic residues; the sequence is EPRERGERGERGN.

It belongs to the eIF-3 subunit E family. As to quaternary structure, component of the eukaryotic translation initiation factor 3 (eIF-3) complex.

The protein localises to the cytoplasm. Its function is as follows. Component of the eukaryotic translation initiation factor 3 (eIF-3) complex, which is involved in protein synthesis of a specialized repertoire of mRNAs and, together with other initiation factors, stimulates binding of mRNA and methionyl-tRNAi to the 40S ribosome. The eIF-3 complex specifically targets and initiates translation of a subset of mRNAs involved in cell proliferation. This chain is Eukaryotic translation initiation factor 3 subunit E, found in Cryptococcus neoformans var. neoformans serotype D (strain JEC21 / ATCC MYA-565) (Filobasidiella neoformans).